Consider the following 561-residue polypeptide: Nephronectin (561 aa).

The N-terminal stretch at 1 to 19 (MAVLLAAVLASSLYLQVAA) is a signal peptide. Residues 52-87 (SWGQCQPVCQPQCKHGECVGPNKCKCHPGFAGKTCN) form the EGF-like 1 domain. Intrachain disulfides connect Cys-56-Cys-69, Cys-60-Cys-75, Cys-77-Cys-86, Cys-93-Cys-104, Cys-100-Cys-113, and Cys-115-Cys-127. The EGF-like 2; calcium-binding domain maps to 89–128 (DLNECGLKPRPCKHRCMNTFGSYKCYCLNGYMLLPDGSCS). Positions 132 to 168 (SCSMANCQYGCDVVKGQVRCQCPSPGLQLAPDGRTCV) constitute an EGF-like 3 domain. One can recognise an EGF-like 4; calcium-binding domain in the interval 169–213 (DIDECATGRVSCPRFRQCVNTFGSYICKCHTGFDLMYIGGKYQCH). Cystine bridges form between Cys-173/Cys-186, Cys-180/Cys-195, Cys-197/Cys-212, Cys-218/Cys-231, Cys-225/Cys-240, and Cys-242/Cys-253. Residues 214-254 (DIDECSLGQHQCSSYARCYNIHGSYKCQCRDGYEGDGLNCV) enclose the EGF-like 5; calcium-binding domain. Residues 266–370 (PIHMPERNGT…TSTTTRVITV (105 aa)) form a disordered region. Residues 307–316 (TNRPTSKPTT) show a composition bias toward low complexity. Residues 317–348 (RPTPNPTPQPTPPPPPPLPTEPRTTPLPPTPE) are compositionally biased toward pro residues. A compositionally biased stretch (low complexity) spans 352–366 (TRPTTIAPATSTTTR). The Integrin interaction signature appears at 382–384 (RGD). One can recognise an MAM domain in the interval 420 to 561 (HSCNFDHGLC…DDVSLKRGRC (142 aa)).

Belongs to the nephronectin family. As to quaternary structure, homodimer and homotrimer. In terms of tissue distribution, expressed in kidney (at protein level).

It is found in the secreted. Its subcellular location is the extracellular space. The protein resides in the extracellular matrix. In terms of biological role, functional ligand of integrin alpha-8/beta-1 in kidney development. Regulates the expression of GDNF with integrin alpha-8/beta-1 which is essential for kidney development. May also play a role in the development and function of various tissues, regulating cell adhesion, spreading and survival through the binding of several integrins. The polypeptide is Nephronectin (Npnt) (Mus musculus (Mouse)).